The following is a 381-amino-acid chain: Chaperone protein DnaJ (381 aa).

In terms of domain architecture, J spans 5–70; it reads DYYDVLGVSK…EKKAAYDRFG (66 aa). A CR-type zinc finger spans residues 140 to 218; the sequence is GLQKTINVPT…CRGQGRVEKD (79 aa). Cys-153, Cys-156, Cys-170, Cys-173, Cys-192, Cys-195, Cys-206, and Cys-209 together coordinate Zn(2+). CXXCXGXG motif repeat units follow at residues 153–160, 170–177, 192–199, and 206–213; these read CSSCEGTG, CPTCSGMG, CPTCSGLG, and CKSCRGQG.

Belongs to the DnaJ family. As to quaternary structure, homodimer. Zn(2+) is required as a cofactor.

It localises to the cytoplasm. Its function is as follows. Participates actively in the response to hyperosmotic and heat shock by preventing the aggregation of stress-denatured proteins and by disaggregating proteins, also in an autonomous, DnaK-independent fashion. Unfolded proteins bind initially to DnaJ; upon interaction with the DnaJ-bound protein, DnaK hydrolyzes its bound ATP, resulting in the formation of a stable complex. GrpE releases ADP from DnaK; ATP binding to DnaK triggers the release of the substrate protein, thus completing the reaction cycle. Several rounds of ATP-dependent interactions between DnaJ, DnaK and GrpE are required for fully efficient folding. Also involved, together with DnaK and GrpE, in the DNA replication of plasmids through activation of initiation proteins. In Ruegeria pomeroyi (strain ATCC 700808 / DSM 15171 / DSS-3) (Silicibacter pomeroyi), this protein is Chaperone protein DnaJ.